The sequence spans 21 residues: Azemiopsin (21 aa).

Residues 1–14 (DNWWPKPPHQGPRP) show a composition bias toward pro residues. The disordered stretch occupies residues 1 to 21 (DNWWPKPPHQGPRPPRPRPKP). Implicated in receptor binding regions lie at residues 3-6 (WWPK), 8-11 (PHQG), and 13-14 (RP).

In terms of assembly, monomer. In terms of tissue distribution, expressed by the venom gland.

The protein localises to the secreted. Its function is as follows. In vitro, reversibly blocks human muscle-type nicotinic acetylcholine receptors (nAChR) alpha-1-beta-1-epsilon-delta/CHRNA1-CHRNB1-CHRNE-CHRND (EC(50)=0.44 uM) and alpha-1-beta-1-gamma-delta/CHRNA1-CHRNB1-CHRNG-CHRND (EC(50)=1.56 uM). Binds to nAChR from T.californica (IC(50)=0.03-0.18 uM), human neuronal nAChR alpha-7/CHRNA7 (IC(50)=22 uM) and acetylcholine-binding proteins (AChBP) from L.stagnalis (IC(50)=63 uM) and A.californica (IC(50)=230 uM). This is Azemiopsin from Azemiops feae (Fea's viper).